Here is a 200-residue protein sequence, read N- to C-terminus: Recombination protein RecR (200 aa).

The C4-type zinc-finger motif lies at 59–74; that stretch reads CEKCNTFTEAQICEVC. Residues 82 to 177 form the Toprim domain; that stretch reads ALLCVVETPA…AVTRLARGVP (96 aa).

This sequence belongs to the RecR family.

Functionally, may play a role in DNA repair. It seems to be involved in an RecBC-independent recombinational process of DNA repair. It may act with RecF and RecO. This Burkholderia mallei (strain NCTC 10247) protein is Recombination protein RecR.